The sequence spans 150 residues: Histone H2A.1 (150 aa).

Methionine 1 is modified (N-acetylmethionine). Basic residues-rich tracts occupy residues 1–24 and 141–150; these read MDASTKTKKGAGGRKGGGPRKKSV and SKAKKSPKKA. Disordered stretches follow at residues 1 to 26 and 128 to 150; these read MDASTKTKKGAGGRKGGGPRKKSVTR and RKENAAASTPKSPSKAKKSPKKA. 2 short sequence motifs (SPKK motif) span residues 139 to 142 and 146 to 149; these read SPSK and SPKK.

Belongs to the histone H2A family. The nucleosome is a histone octamer containing two molecules each of H2A, H2B, H3 and H4 assembled in one H3-H4 heterotetramer and two H2A-H2B heterodimers. The octamer wraps approximately 147 bp of DNA. High expression in root meristematic tissues, moderate in whole shoot and very low in mature leaves.

The protein resides in the nucleus. The protein localises to the chromosome. In terms of biological role, core component of nucleosome. Nucleosomes wrap and compact DNA into chromatin, limiting DNA accessibility to the cellular machineries which require DNA as a template. Histones thereby play a central role in transcription regulation, DNA repair, DNA replication and chromosomal stability. DNA accessibility is regulated via a complex set of post-translational modifications of histones, also called histone code, and nucleosome remodeling. The protein is Histone H2A.1 of Pisum sativum (Garden pea).